A 184-amino-acid chain; its full sequence is Adenine phosphoribosyltransferase (184 aa).

The protein belongs to the purine/pyrimidine phosphoribosyltransferase family. As to quaternary structure, homodimer.

The protein resides in the cytoplasm. The catalysed reaction is AMP + diphosphate = 5-phospho-alpha-D-ribose 1-diphosphate + adenine. It functions in the pathway purine metabolism; AMP biosynthesis via salvage pathway; AMP from adenine: step 1/1. Functionally, catalyzes a salvage reaction resulting in the formation of AMP, that is energically less costly than de novo synthesis. The chain is Adenine phosphoribosyltransferase from Parafrankia sp. (strain EAN1pec).